The chain runs to 319 residues: Free fatty acid receptor 3 (319 aa).

Over 1-15 (MGTSFFLGNYWLFFS) the chain is Extracellular. A helical transmembrane segment spans residues 16 to 36 (VYLLVFLVGLPLNVMALVVFV). The Cytoplasmic portion of the chain corresponds to 37-43 (GKLRRRP). A helical membrane pass occupies residues 44-64 (VAVDLLLLNLTISDLLLLLFL). Over 65–98 (PFRMVEAACGMRWLLPFIFCPLSGFLFFTTIYLT) the chain is Extracellular. A disulfide bridge links C84 with C165. The chain crosses the membrane as a helical span at residues 99-119 (SLFLTAVSIERFLSVAYPLWY). Residues 120–127 (KTRPRLAQ) lie on the Cytoplasmic side of the membrane. The helical transmembrane segment at 128–148 (AGLVSVVCWFLASAHCSVVYI) threads the bilayer. Residues 149 to 183 (TEYWGNATYSQGTNGTCYLEFREDQLAILLPVRLE) lie on the Extracellular side of the membrane. N154 and N162 each carry an N-linked (GlcNAc...) asparagine glycan. A helical transmembrane segment spans residues 184 to 206 (MAVVLFMVPLCITSYCYSRLVWI). The Cytoplasmic segment spans residues 207–218 (LSRGASRRRRKR). The helical transmembrane segment at 219-239 (IMGLLAATLLIFFVCFGPYNM) threads the bilayer. Topologically, residues 240–254 (SHVVGYVSRESPSWR) are extracellular. The chain crosses the membrane as a helical span at residues 255–275 (SYVLLLSTLNSCIDPLVFYFS). The Cytoplasmic portion of the chain corresponds to 276-319 (SSKFQADFHQLLGRLLRTCVPWTQQVSLELKVKNGEEPSKECPS).

It belongs to the G-protein coupled receptor 1 family. As to expression, expressed in white adipose tissue and skeletal muscle (at protein level). Abundantly expressed in sympathetic ganglia such as the superior cervical ganglion. Also expressed by intestinal endocrine cells.

Its subcellular location is the cell membrane. Functionally, g protein-coupled receptor that is activated by a major product of dietary fiber digestion, the short chain fatty acids (SCFAs), and that plays a role in the regulation of whole-body energy homeostasis and in intestinal immunity. In omnivorous mammals, the short chain fatty acids acetate, propionate and butyrate are produced primarily by the gut microbiome that metabolizes dietary fibers. SCFAs serve as a source of energy but also act as signaling molecules. That G protein-coupled receptor is probably coupled to the pertussis toxin-sensitive, G(i/o)-alpha family of G proteins. Its activation results in the formation of inositol 1,4,5-trisphosphate, the mobilization of intracellular calcium, the phosphorylation of the MAPK3/ERK1 and MAPK1/ERK2 kinases and the inhibition of intracellular cAMP accumulation. Activated by SCFAs and by beta-hydroxybutyrate, a ketone body produced by the liver upon starvation, it inhibits N-type calcium channels and modulates the activity of sympathetic neurons through a signaling cascade involving the beta and gamma subunits of its coupled G protein, phospholipase C and MAP kinases. Thereby, it may regulate energy expenditure through the control of the sympathetic nervous system that controls for instance heart rate. Upon activation by SCFAs accumulating in the intestine, it may also signal to the brain via neural circuits which in turn would regulate intestinal gluconeogenesis. May also control the production of hormones involved in whole-body energy homeostasis. May for instance, regulate blood pressure through renin secretion. May also regulate secretion of the PYY peptide by enteroendocrine cells and control gut motility, intestinal transit rate, and the harvesting of energy from SCFAs produced by gut microbiota. May also indirectly regulate the production of LEP/Leptin, a hormone acting on the CNS to inhibit food intake, in response to the presence of short-chain fatty acids in the intestine. Finally, may also play a role in glucose homeostasis. Besides its role in energy homeostasis, may play a role in intestinal immunity. May mediate the activation of the inflammatory and immune response by SCFAs in the gut, regulating the rapid production of chemokines and cytokines by intestinal epithelial cells. Exhibits an SCFA-independent constitutive G protein-coupled receptor activity. In Mus musculus (Mouse), this protein is Free fatty acid receptor 3 (Ffar3).